The chain runs to 641 residues: 1-deoxy-D-xylulose-5-phosphate synthase (641 aa).

Thiamine diphosphate contacts are provided by residues H79 and A120–S122. D151 contributes to the Mg(2+) binding site. Thiamine diphosphate contacts are provided by residues G152–A153, N180, Y290, and E372. N180 serves as a coordination point for Mg(2+).

It belongs to the transketolase family. DXPS subfamily. As to quaternary structure, homodimer. Mg(2+) serves as cofactor. The cofactor is thiamine diphosphate.

It carries out the reaction D-glyceraldehyde 3-phosphate + pyruvate + H(+) = 1-deoxy-D-xylulose 5-phosphate + CO2. Its pathway is metabolic intermediate biosynthesis; 1-deoxy-D-xylulose 5-phosphate biosynthesis; 1-deoxy-D-xylulose 5-phosphate from D-glyceraldehyde 3-phosphate and pyruvate: step 1/1. Functionally, catalyzes the acyloin condensation reaction between C atoms 2 and 3 of pyruvate and glyceraldehyde 3-phosphate to yield 1-deoxy-D-xylulose-5-phosphate (DXP). The protein is 1-deoxy-D-xylulose-5-phosphate synthase of Bradyrhizobium sp. (strain BTAi1 / ATCC BAA-1182).